Reading from the N-terminus, the 573-residue chain is Poly(ribitol-phosphate) beta-N-acetylglucosaminyltransferase TarS (573 aa).

UDP-N-acetyl-alpha-D-glucosamine contacts are provided by residues Pro9, Asp41, Asn68, Arg76, 92 to 94 (DSD), Arg127, and Glu178. Asp94 contributes to the Mn(2+) binding site. The active-site Proton acceptor is Asp179. UDP-N-acetyl-alpha-D-glucosamine-binding positions include Arg207 and 211–213 (HMS).

It belongs to the glycosyltransferase 2 family. Homotrimer. The cofactor is Mn(2+).

The enzyme catalyses 4-O-[(D-ribitylphospho)(n)-di{(2R)-glycerylphospho}]-N-acetyl-beta-D-mannosaminyl-(1-&gt;4)-N-acetyl-alpha-D-glucosaminyl di-trans,octa-cis-undecaprenyl diphosphate + n UDP-N-acetyl-alpha-D-glucosamine = 4-O-([2-N-acetyl-beta-D-glucosaminyl-1-D-ribitylphospho](n)-di{[2R]-1-glycerylphospho})-N-acetyl-beta-D-mannosaminyl-(1-&gt;4)-N-acetyl-alpha-D-glucosaminyl di-trans,octa-cis-undecaprenyl diphosphate + n UDP + n H(+). Its pathway is cell wall biogenesis; poly(ribitol phosphate) teichoic acid biosynthesis. Its function is as follows. Attaches beta-O-GlcNAc (beta-O-N-acetyl-D-glucosamine) residues to the C4 position of poly(RboP)-wall teichoic acids (WTAs). Mediates beta-lactam resistance in methicillin resistant Staphylococcus aureus (MRSA) strains. In Staphylococcus aureus (strain Mu50 / ATCC 700699), this protein is Poly(ribitol-phosphate) beta-N-acetylglucosaminyltransferase TarS.